Here is a 298-residue protein sequence, read N- to C-terminus: Foldase protein PrsA 1 (298 aa).

Positions 1 to 19 (MKKWLIALAGVLLTFTLAG) are cleaved as a signal peptide. Cysteine 20 is lipidated: N-palmitoyl cysteine. The S-diacylglycerol cysteine moiety is linked to residue cysteine 20. The region spanning 136–232 (EPKVTVQHIL…NGYEIIRMIK (97 aa)) is the PpiC domain.

Belongs to the PrsA family.

It localises to the cell membrane. It catalyses the reaction [protein]-peptidylproline (omega=180) = [protein]-peptidylproline (omega=0). In terms of biological role, plays a major role in protein secretion by helping the post-translocational extracellular folding of several secreted proteins. This Lactiplantibacillus plantarum (strain ATCC BAA-793 / NCIMB 8826 / WCFS1) (Lactobacillus plantarum) protein is Foldase protein PrsA 1 (prsA1).